A 416-amino-acid chain; its full sequence is Solute carrier family 25 member 46 (416 aa).

The span at 1 to 13 (MQPRRPDRFDGLE) shows a compositional bias: basic and acidic residues. Residues 1–91 (MQPRRPDRFD…GEESSSSSSG (91 aa)) are disordered. Positions 37-49 (SFSSSGDLSQHWV) are enriched in polar residues. The span at 82 to 91 (GEESSSSSSG) shows a compositional bias: low complexity. A Solcar 1 repeat occupies 94–185 (HLNRFAGFGI…GMLSEFTHLP (92 aa)). The next 6 helical transmembrane spans lie at 101 to 121 (FGIG…CIVL), 161 to 181 (MGST…LSEF), 197 to 217 (IGGH…FYSA), 256 to 276 (LLPL…HYII), 312 to 332 (FPEL…LYPL), and 381 to 401 (LGFY…AIVL). One copy of the Solcar 2 repeat lies at 309-414 (EDYFPELIAN…KIIYSSVVQT (106 aa)).

The protein belongs to the mitochondrial carrier (TC 2.A.29) family.

Its subcellular location is the mitochondrion outer membrane. May play a role in mitochondrial dynamics by controlling mitochondrial membrane fission. The polypeptide is Solute carrier family 25 member 46 (slc25a46) (Xenopus tropicalis (Western clawed frog)).